A 200-amino-acid chain; its full sequence is uncharacterized protein (200 aa).

Positions 1-19 (MNAMFHSLFALSFVSLVAS) are cleaved as a signal peptide. Residues 148 to 168 (FMVIVSLAAFCISVLAGLALQ) form a helical membrane-spanning segment.

It is found in the membrane. This is an uncharacterized protein from Caenorhabditis elegans.